The following is a 322-amino-acid chain: Olfactory receptor 11L1 (322 aa).

Over 1–25 the chain is Extracellular; sequence MEPQNTSTVTNFQLLGFQNLLEWQA. An N-linked (GlcNAc...) asparagine glycan is attached at asparagine 5. The helical transmembrane segment at 26 to 46 threads the bilayer; sequence LLFVIFLLIYCLTIIGNVVII. The Cytoplasmic segment spans residues 47–54; that stretch reads TVVSQGLR. Residues 55-75 form a helical membrane-spanning segment; that stretch reads LHSPMYMFLQHLSFLEVWYTS. The Extracellular segment spans residues 76–99; sequence TTVPLLLANLLSWGQAISFSACMA. A disulfide bond links cysteine 97 and cysteine 189. Residues 100 to 120 traverse the membrane as a helical segment; sequence QLYFFVFLGATECFLLAFMAY. Residues 121–139 are Cytoplasmic-facing; that stretch reads DRYLAICSPLRYPFLMHRG. Residues 140-160 form a helical membrane-spanning segment; sequence LCARLVVVSWCTGVSTGFLPS. The Extracellular portion of the chain corresponds to 161–197; that stretch reads LMISRLDFCGRNQINHFFCDLPPLMQLSCSRVYITEV. Residues 198 to 217 traverse the membrane as a helical segment; sequence TIFILSIAVLCICFFLTLGP. Residues 218-237 lie on the Cytoplasmic side of the membrane; sequence YVFIVSSILRIPSTSGRRKT. Residues 238–258 traverse the membrane as a helical segment; that stretch reads FSTCGSHLAVVTLYYGTMISM. The Extracellular segment spans residues 259–271; that stretch reads YVCPSPHLLPEIN. Residues 272-292 form a helical membrane-spanning segment; that stretch reads KIISVFYTVVTPLLNPVIYSL. The Cytoplasmic segment spans residues 293–322; it reads RNKDFKEAVRKVMRRKCGILWSTSKRKFLY.

Belongs to the G-protein coupled receptor 1 family.

Its subcellular location is the cell membrane. Functionally, odorant receptor. This Homo sapiens (Human) protein is Olfactory receptor 11L1 (OR11L1).